A 968-amino-acid chain; its full sequence is Alanine--tRNA ligase, cytoplasmic (968 aa).

Methionine 1 carries the N-acetylmethionine modification. At serine 3 the chain carries Phosphoserine. Residue lysine 19 is modified to N6-acetyllysine. Residues arginine 77, histidine 95, tryptophan 176, and isoleucine 214–asparagine 216 contribute to the ATP site. Asparagine 216 and aspartate 239 together coordinate L-alanine. Glycine 243 serves as a coordination point for ATP. Serine 399 and serine 555 each carry phosphoserine. 4 residues coordinate Zn(2+): histidine 605, histidine 609, cysteine 723, and histidine 727. A Nuclear localization signal motif is present at residues arginine 750–alanine 763. Residue lysine 876 is modified to N6-acetyllysine. N6,N6,N6-trimethyllysine; alternate is present on lysine 943. Lysine 943 is modified (N6,N6-dimethyllysine; alternate). Position 943 is an N6-methyllysine; alternate (lysine 943).

Belongs to the class-II aminoacyl-tRNA synthetase family. In terms of assembly, monomer. Interacts with ANKRD16; the interaction is direct. Zn(2+) serves as cofactor. ISGylated. Post-translationally, methylation at 'Lys-943' by METTL21C.

The protein resides in the cytoplasm. Its subcellular location is the nucleus. It catalyses the reaction tRNA(Ala) + L-alanine + ATP = L-alanyl-tRNA(Ala) + AMP + diphosphate. It carries out the reaction (S)-lactate + ATP + H(+) = (S)-lactoyl-AMP + diphosphate. The catalysed reaction is (S)-lactoyl-AMP + L-lysyl-[protein] = N(6)-[(S)-lactoyl]-L-lysyl-[protein] + AMP + 2 H(+). The protein lactyltransferase activity is inhibited by beta-alanine. Its function is as follows. Catalyzes the attachment of alanine to tRNA(Ala) in a two-step reaction: alanine is first activated by ATP to form Ala-AMP and then transferred to the acceptor end of tRNA(Ala). Also edits incorrectly charged tRNA(Ala) via its editing domain. In presence of high levels of lactate, also acts as a protein lactyltransferase that mediates lactylation of lysine residues in target proteins, such as TEAD1, TP53/p53 and YAP1. Protein lactylation takes place in a two-step reaction: lactate is first activated by ATP to form lactate-AMP and then transferred to lysine residues of target proteins. Acts as an inhibitor of TP53/p53 activity by catalyzing lactylation of TP53/p53. Acts as a positive regulator of the Hippo pathway by mediating lactylation of TEAD1 and YAP1. This is Alanine--tRNA ligase, cytoplasmic (Aars1) from Rattus norvegicus (Rat).